The sequence spans 561 residues: Putative transport protein YbjL (561 aa).

The next 5 membrane-spanning stretches (helical) occupy residues 8–28 (LLNG…LCLG), 32–52 (LGSV…LLGQ), 66–86 (FMLF…SIFF), 94–114 (MLAL…GKLF), and 158–178 (NLSL…IVGA). 2 RCK C-terminal domains span residues 200–288 (RGLD…SLRN) and 292–373 (VFDR…RIGF). The next 5 helical transmembrane spans lie at 383–403 (LLAF…TFQF), 406–426 (FSFG…LGFL), 447–467 (FGLM…ISNG), 475–495 (MLIA…LFGA), and 540–560 (AIAN…WPGL).

The protein belongs to the AAE transporter (TC 2.A.81) family. YbjL subfamily.

Its subcellular location is the cell membrane. This Salmonella gallinarum (strain 287/91 / NCTC 13346) protein is Putative transport protein YbjL.